Here is a 235-residue protein sequence, read N- to C-terminus: Meiotically up-regulated gene 123 protein (235 aa).

Residues 1–14 (MERLATRSSHDDPY) show a composition bias toward basic and acidic residues. Disordered regions lie at residues 1–34 (MERL…SNGS), 58–83 (PLHS…GGMR), and 169–235 (SRAD…FDSD). Polar residues predominate over residues 15–34 (SRSSLPTSNAINSNHESNGS). The span at 61 to 77 (SSPSIKSSSQNGKSSSK) shows a compositional bias: low complexity. Residues 176-202 (ETTQSDGFESRSGSPTHDIQSYLVNRR) show a composition bias toward polar residues. Phosphoserine occurs at positions 180, 187, and 189. The residue at position 191 (Thr191) is a Phosphothreonine.

It is found in the cytoplasm. The protein localises to the nucleus. Its function is as follows. Involved in sporulation and has a role in meiosis. The chain is Meiotically up-regulated gene 123 protein (mug123) from Schizosaccharomyces pombe (strain 972 / ATCC 24843) (Fission yeast).